We begin with the raw amino-acid sequence, 101 residues long: Urinary protein 3 (101 aa).

The signal sequence occupies residues 1-21; the sequence is MGKHILLLPLGLSLLMSSLLA. The 78-residue stretch at 22–99 folds into the UPAR/Ly6 domain; it reads LQCFRCISFD…CSATPFCNMV (78 aa). Disulfide bonds link Cys24–Cys51, Cys27–Cys36, Cys43–Cys70, Cys73–Cys89, and Cys90–Cys96.

It localises to the secreted. This chain is Urinary protein 3, found in Rattus norvegicus (Rat).